The following is a 113-amino-acid chain: U11-theraphotoxin-Hhn1a (113 aa).

The first 21 residues, 1–21 (MNTVRVTFLLVFVLPVSLGQA), serve as a signal peptide directing secretion. A propeptide spanning residues 22–74 (DKDENRMEMQEKTEQGKSYLDFAENLLLQKLEELEAKLLEEDSEESRNSRQKR) is cleaved from the precursor. Residues 60–69 (LEEDSEESRN) show a composition bias toward basic and acidic residues. The interval 60 to 83 (LEEDSEESRNSRQKRCIGEGVPCD) is disordered. 3 disulfides stabilise this stretch: C75-C90, C82-C95, and C89-C110.

It belongs to the neurotoxin 14 (magi-1) family. 01 (HNTX-16) subfamily. As to expression, expressed by the venom gland.

The protein localises to the secreted. Functionally, probable ion channel inhibitor. The sequence is that of U11-theraphotoxin-Hhn1a from Cyriopagopus hainanus (Chinese bird spider).